A 327-amino-acid chain; its full sequence is Germination protease (327 aa).

The propeptide occupies 1–7; it reads MNSVRTD.

The protein belongs to the peptidase A25 family. Homotetramer. Autoproteolytically processed. The inactive tetrameric zymogen termed p46 autoprocesses to a smaller form termed p41, which is active only during spore germination.

It catalyses the reaction Endopeptidase action with P4 Glu or Asp, P1 preferably Glu &gt; Asp, P1' hydrophobic and P2' Ala.. In terms of biological role, initiates the rapid degradation of small, acid-soluble proteins during spore germination. In Clostridium acetobutylicum (strain ATCC 824 / DSM 792 / JCM 1419 / IAM 19013 / LMG 5710 / NBRC 13948 / NRRL B-527 / VKM B-1787 / 2291 / W), this protein is Germination protease.